Consider the following 434-residue polypeptide: MLGAVKMEGHEATDWSSYYGEAEAYSSVGNMNAGLSMNPMNTYMSMSAMRTSANMTASSMNMSYVNTGMSPSLTGMSPGTGAMTGMGTGVPSMASHLSPSMIPMSAQTTAMNALAPYTNINSMSPIYGQSNINRSRDPKTYRRSYTHAKPPYSYISLITMAIQQSPNKMLTLSEIYQWIMDLFPFYRQNQQRWQNSIRHSLSFNDCFLKVPRSPDKPGKGSFWTLHPDSGNMFENGCYLRRQKRFKCEKKPSLREGGGKKLSEGASSVGSAANSSSESSVGNESPHSSSSPCQEQKRSLVDMKSSQGLSPKHATSPASQAQHLLSQHHSVLSHEAQSHLKPEHHYSFNHPFSINNLMSSEQQHHHHHHHNHHHHHKMDLKAYEQVMHYSSYGSPMAGSLAMSTVTNKSGLESSPITSDTSYYQGGYSRPIMNSS.

The segment at residues Lys149 to Lys243 is a DNA-binding region (fork-head). A compositionally biased stretch (basic and acidic residues) spans Lys249–Ser262. 2 disordered regions span residues Lys249 to Leu339 and Ser408 to Ser434. 2 stretches are compositionally biased toward low complexity: residues Glu263–Pro291 and Ala317–His333. The span at Ser408–Tyr422 shows a compositional bias: polar residues.

As to expression, at gastrula stage, expressed in both the anterior and posterior endoderm, with endodermal expression persisting into early tailbud stages. Expression is absent in gastrula stage ectoderm. During tailbud stages, expressed in the pharyngeal region, the neural floor plate, the midbrain, hindbrain and in cranial neural crest cells. Expressed in the foregut of hatching larvae. In tadpoles, expressed in the pharyngeal pouches and in other anterior endodermal regions. Within the tadpole nervous system, expressed in the neural floor plate, at high levels in the ventral midbrain and hindbrain, and at lower levels in the spinal cord. Expressed in the adult lung and brain.

It localises to the nucleus. In terms of biological role, acts as a transcriptional activator during early development, limiting the extent of mesoderm formation in the gastrula. Binds to DNA via the target sequence 5'-GT[AC]AACA-3', with 5'-GTAAACA-3' being the preferred binding site. The chain is Forkhead box protein A2-A (foxa2-a) from Xenopus laevis (African clawed frog).